The chain runs to 445 residues: Xylose isomerase (445 aa).

Catalysis depends on residues His107 and Asp110. Positions 238, 274, 277, 302, 313, 315, and 345 each coordinate Mg(2+).

Belongs to the xylose isomerase family. As to quaternary structure, homotetramer. Requires Mg(2+) as cofactor.

Its subcellular location is the cytoplasm. The catalysed reaction is alpha-D-xylose = alpha-D-xylulofuranose. In Bacillus velezensis (strain DSM 23117 / BGSC 10A6 / LMG 26770 / FZB42) (Bacillus amyloliquefaciens subsp. plantarum), this protein is Xylose isomerase.